The chain runs to 297 residues: UDP-N-acetylenolpyruvoylglucosamine reductase (297 aa).

Residues 27–191 (TGGNADIFVM…LDATFSLELE (165 aa)) form the FAD-binding PCMH-type domain. Residue Arg170 is part of the active site. Ser220 functions as the Proton donor in the catalytic mechanism. Residue Glu290 is part of the active site.

Belongs to the MurB family. The cofactor is FAD.

The protein localises to the cytoplasm. The catalysed reaction is UDP-N-acetyl-alpha-D-muramate + NADP(+) = UDP-N-acetyl-3-O-(1-carboxyvinyl)-alpha-D-glucosamine + NADPH + H(+). Its pathway is cell wall biogenesis; peptidoglycan biosynthesis. Its function is as follows. Cell wall formation. The protein is UDP-N-acetylenolpyruvoylglucosamine reductase of Listeria welshimeri serovar 6b (strain ATCC 35897 / DSM 20650 / CCUG 15529 / CIP 8149 / NCTC 11857 / SLCC 5334 / V8).